We begin with the raw amino-acid sequence, 282 residues long: Putative phosphite transport system permease protein HtxC (282 aa).

The next 4 membrane-spanning stretches (helical) occupy residues 23-43, 81-101, 130-150, and 239-259; these read HFATSVVVLSLLAVAWYVCQI, LAMATIGTIFATIIAFPLALM, VYALVFVAAVGFGPFSGVLAI, and FNKMITVLAVVLLMVSAIDFI. The ABC transmembrane type-1 domain occupies 77 to 260; it reads AGETLAMATI…LMVSAIDFIS (184 aa).

The protein belongs to the binding-protein-dependent transport system permease family.

It is found in the cell inner membrane. Probably forms part of a binding-protein-dependent hypophosphite transporter. This chain is Putative phosphite transport system permease protein HtxC (htxC), found in Stutzerimonas stutzeri (Pseudomonas stutzeri).